The chain runs to 334 residues: G-protein coupled receptor 12 (334 aa).

The Extracellular segment spans residues 1-48 (MNEDPKVNLSGLPRDCIEAGTPENISAAVPSQGSVVESEPELVVNPWD). N-linked (GlcNAc...) asparagine glycans are attached at residues asparagine 8 and asparagine 24. Residues 49-69 (IVLCSSGTLICCENAVVVLII) form a helical membrane-spanning segment. Topologically, residues 70-78 (FHSPSLRAP) are cytoplasmic. A helical membrane pass occupies residues 79–99 (MFLLIGSLALADLLAGLGLII). Residues 100–113 (NFVFAYLLQSEATK) lie on the Extracellular side of the membrane. The chain crosses the membrane as a helical span at residues 114 to 134 (LVTIGLIVASFSASVCSLLAI). Residues 135–158 (TVDRYLSLYYALTYHSERTVTFTY) are Cytoplasmic-facing. A helical transmembrane segment spans residues 159-179 (VMLVMLWGTSTCLGLLPVMGW). Over 180–199 (NCLRDESTCSVVRPLTKNNA) the chain is Extracellular. Residues 200 to 220 (AILSISFLFMFALMLQLYIQI) form a helical membrane-spanning segment. Over 221-252 (CKIVMRHAHQIALQHHFLATSHYVTTRKGIST) the chain is Cytoplasmic. The chain crosses the membrane as a helical span at residues 253 to 273 (LALILGTFAACWMPFTLYSLI). The Extracellular segment spans residues 274 to 282 (ADYTYPSIY). The helical transmembrane segment at 283 to 303 (TYATLLPATYNSIINPVIYAF) threads the bilayer. The Cytoplasmic segment spans residues 304–334 (RNQEIQKALCLICCGCIPNTLSQRARSPSDV). Cysteine 317 is lipidated: S-palmitoyl cysteine. Phosphoserine is present on residues serine 330 and serine 332.

This sequence belongs to the G-protein coupled receptor 1 family. Expressed in the brain, pituitary gland and testis.

It localises to the cell membrane. In terms of biological role, receptor with constitutive G(s) signaling activity that activates cyclic AMP. Promotes neurite outgrowth and blocks myelin inhibition in neurons. The protein is G-protein coupled receptor 12 (Gpr12) of Rattus norvegicus (Rat).